A 251-amino-acid chain; its full sequence is Pyrroloquinoline-quinone synthase (251 aa).

The protein belongs to the PqqC family.

It catalyses the reaction 6-(2-amino-2-carboxyethyl)-7,8-dioxo-1,2,3,4,7,8-hexahydroquinoline-2,4-dicarboxylate + 3 O2 = pyrroloquinoline quinone + 2 H2O2 + 2 H2O + H(+). Its pathway is cofactor biosynthesis; pyrroloquinoline quinone biosynthesis. Its function is as follows. Ring cyclization and eight-electron oxidation of 3a-(2-amino-2-carboxyethyl)-4,5-dioxo-4,5,6,7,8,9-hexahydroquinoline-7,9-dicarboxylic-acid to PQQ. This chain is Pyrroloquinoline-quinone synthase, found in Pseudomonas putida (strain ATCC 47054 / DSM 6125 / CFBP 8728 / NCIMB 11950 / KT2440).